Reading from the N-terminus, the 289-residue chain is 5'-3' exonuclease (289 aa).

One can recognise a 5'-3' exonuclease domain in the interval 166–256; it reads VEPQKIPDYL…EEDLKIKRPD (91 aa).

Its function is as follows. 5'-3' exonuclease acting preferentially on double-stranded DNA. This Aquifex aeolicus (strain VF5) protein is 5'-3' exonuclease.